The primary structure comprises 478 residues: Patatin-like phospholipase domain-containing protein 2 (478 aa).

The Cytoplasmic segment spans residues Met-1–Trp-8. Residues Asn-9–Leu-29 form a helical membrane-spanning segment. Positions Ile-10–Lys-179 constitute a PNPLA domain. The GXGXXG motif lies at Gly-14–Gly-19. Residues Arg-30 to His-42 are Extracellular-facing. The N-linked (GlcNAc...) asparagine glycan is linked to Asn-39. Residues Ile-43 to Gly-63 traverse the membrane as a helical segment. Residues Gly-45–Gly-49 carry the GXSXG motif. Ser-47 serves as the catalytic Nucleophile. Residues Glu-64 to Glu-137 lie on the Cytoplasmic side of the membrane. Lys-92 is covalently cross-linked (Glycyl lysine isopeptide (Lys-Gly) (interchain with G-Cter in ubiquitin)). Residues Leu-138 to Thr-158 traverse the membrane as a helical segment. The Extracellular portion of the chain corresponds to Leu-159–Arg-323. Asp-166 serves as the catalytic Proton acceptor. The DGA/G motif lies at Asp-166–Gly-168. A helical transmembrane segment spans residues Leu-324 to Ile-344. Topologically, residues Arg-345–Cys-478 are cytoplasmic. Ser-366 carries the post-translational modification Phosphoserine; in vitro. Position 388 is a phosphoserine; by PKA (Ser-388). Phosphoserine occurs at positions 398 and 422. Residues Arg-456 to Cys-478 form a disordered region. The segment covering Ala-457–Cys-478 has biased composition (low complexity). Position 460 is a phosphoserine; in vitro (Ser-460).

Interacts with ABHD5; this association stimulates PNPLA2 triglyceride hydrolase activity. Interacts with SERPINF1; this interaction stimulates the phospholipase A2 activity of PNPLA2. Despite a colocalization in lipid droplets, it probably does not interact with PLIN. Interacts with PLIN5; prevents interaction with ABHD5. Interacts with FAF2. Post-translationally, phosphorylation at Ser-398 by PKA is increased during fasting and moderate intensity exercise, and moderately increases lipolytic activity. In terms of processing, ubiquitinated by PEX2 in response to reactive oxygen species (ROS), leading to its degradation. Ubiquitination is stimulated by LDAH.

It localises to the lipid droplet. The protein localises to the cell membrane. Its subcellular location is the cytoplasm. The catalysed reaction is a triacylglycerol + H2O = a diacylglycerol + a fatty acid + H(+). It carries out the reaction a triacylglycerol + H2O = a 1,2-diacylglycerol + a fatty acid + H(+). It catalyses the reaction a triacylglycerol + H2O = a 1,3-diacylglycerol + a fatty acid + H(+). The enzyme catalyses a triacyl-sn-glycerol + H2O = a 1,3-diacyl-sn-glycerol + a fatty acid + H(+). The catalysed reaction is a triacyl-sn-glycerol + H2O = a 2,3-diacyl-sn-glycerol + a fatty acid + H(+). It carries out the reaction a 1-acylglycerol + a 1,3-diacylglycerol = a triacylglycerol + glycerol. It catalyses the reaction a 1-acylglycerol + a 1,2-diacylglycerol = a triacylglycerol + glycerol. The enzyme catalyses 2 a 1-acylglycerol = a 1,2-diacylglycerol + glycerol. The catalysed reaction is a triacylglycerol + all-trans-retinol = an all-trans-retinyl ester + a diacylglycerol. It carries out the reaction 1,2-di-(9Z-octadecenoyl)-glycerol + (9Z)-octadecenoate + H(+) = 1,2,3-tri-(9Z-octadecenoyl)-glycerol + H2O. It catalyses the reaction 1,2,3-tri-(9Z-octadecenoyl)-glycerol + H2O = 1,3-di-(9Z-octadecenoyl)-glycerol + (9Z)-octadecenoate + H(+). The enzyme catalyses 1-(9Z-octadecenoyl)-glycerol + 1,3-di-(9Z-octadecenoyl)-glycerol = 1,2,3-tri-(9Z-octadecenoyl)-glycerol + glycerol. The catalysed reaction is 1-(9Z-octadecenoyl)-glycerol + 1,2-di-(9Z-octadecenoyl)-glycerol = 1,2,3-tri-(9Z-octadecenoyl)-glycerol + glycerol. It carries out the reaction 2 1-(9Z-octadecenoyl)-glycerol = 1,2-di-(9Z-octadecenoyl)-glycerol + glycerol. It catalyses the reaction 1,2,3-tri-(9Z-octadecenoyl)-glycerol + all-trans-retinol = all-trans-retinyl 9Z-octadecenoate + di-(9Z)-octadecenoylglycerol. The enzyme catalyses 1,2,3-tri-(9Z)-hexadecenoylglycerol + H2O = 1,3-di-(9Z)-hexadecenoylglycerol + (9Z)-hexadecenoate + H(+). The catalysed reaction is 1,2,3-tri-(9Z,12Z)-octadecadienoylglycerol + H2O = 1,3-di-(9Z,12Z)-octadecadienoylglycerol + (9Z,12Z)-octadecadienoate + H(+). It carries out the reaction 1,2,3-tri-(9Z,12Z,15Z)-octadecatrienoylglycerol + H2O = 1,3-di-(9Z,12Z,15Z)-octadecatrienoylglycerol + (9Z,12Z,15Z)-octadecatrienoate + H(+). It catalyses the reaction 1,3-di-(9Z)-octadecenoyl-2-hexadecanoylglycerol + H2O = 1,3-di-(9Z-octadecenoyl)-glycerol + hexadecanoate + H(+). The enzyme catalyses 1,2-di-(9Z)-octadecenoyl-3-hexadecanoyl-sn-glycerol + H2O = 1-(9Z)-octadecenoyl-3-hexadecanoyl-sn-glycerol + (9Z)-octadecenoate + H(+). The catalysed reaction is 1-hexadecanoyl-2,3-di-(9Z)-octadecenoyl-sn-glycerol + H2O = 1-hexadecanoyl-3-(9Z)-octadecenoyl-sn-glycerol + (9Z)-octadecenoate + H(+). It carries out the reaction 1,2,3-tri-(9Z-octadecenoyl)-glycerol + H2O = 2,3-di-(9Z)-octadecenoyl-sn-glycerol + (9Z)-octadecenoate + H(+). It catalyses the reaction 1,2,3-tri-(9Z)-hexadecenoylglycerol + H2O = 2,3-di-(9Z)-hexadecenoyl-sn-glycerol + (9Z)-hexadecenoate + H(+). The enzyme catalyses 1,2,3-tri-(9Z,12Z)-octadecadienoylglycerol + H2O = 2,3-di-(9Z,12Z)-octadecadienoyl-sn-glycerol + (9Z,12Z)-octadecadienoate + H(+). The catalysed reaction is 1,2,3-tri-(9Z,12Z,15Z)-octadecatrienoylglycerol + H2O = 2,3-di-(9Z,12Z,15Z)-octadecatrienoyl-sn-glycerol + (9Z,12Z,15Z)-octadecatrienoate + H(+). It carries out the reaction 1,3-di-(9Z)-octadecenoyl-2-hexadecanoylglycerol + H2O = 2-hexadecanoyl-3-(9Z)-octadecenoyl-sn-glycerol + (9Z)-octadecenoate + H(+). It catalyses the reaction 1-hexadecanoyl-2,3-di-(9Z)-octadecenoyl-sn-glycerol + H2O = 2,3-di-(9Z)-octadecenoyl-sn-glycerol + hexadecanoate + H(+). The enzyme catalyses 1,2-di-(9Z)-octadecenoyl-3-hexadecanoyl-sn-glycerol + H2O = 2-(9Z-octadecenoyl)-3-hexadecanoyl-sn-glycerol + (9Z)-octadecenoate + H(+). The catalysed reaction is a 1,2-diacyl-sn-glycero-3-phosphocholine + H2O = a 1-acyl-sn-glycero-3-phosphocholine + a fatty acid + H(+). It carries out the reaction 1,2,3-tri-(9Z-octadecenoyl)-glycerol + 9-hydroxy-octadecanoate = 9-(9Z-octadecenoyloxy)-octadecanoate + 2,3-di-(9Z)-octadecenoyl-sn-glycerol. It catalyses the reaction 1-hexadecanoyl-2,3-di-(9Z)-octadecenoyl-sn-glycerol + 9-hydroxy-octadecanoate = 9-hexadecanoyloxy-octadecanoate + 2,3-di-(9Z)-octadecenoyl-sn-glycerol. The enzyme catalyses 1,2,3-tri-(10Z)-heptadecenoylglycerol + 9-hydroxy-octadecanoate = 2,3-di-(10Z-heptadecenoyl)-sn-glycerol + 9-(10Z-heptadecenoyloxy)-octadecanoate. The catalysed reaction is 1,2,3-tri-(9Z,12Z)-octadecadienoylglycerol + 9-hydroxy-octadecanoate = 2,3-di-(9Z,12Z)-octadecadienoyl-sn-glycerol + 9-(9Z,12Z-octadecadienoyloxy)-octadecanoate. It carries out the reaction 1,2,3-tri-(9Z)-hexadecenoylglycerol + 9-hydroxy-octadecanoate = 2,3-di-(9Z)-hexadecenoyl-sn-glycerol + 9-(9Z-hexadecenoyloxy)-octadecanoate. It catalyses the reaction 9-hydroxy-octadecanoate + 1,2-di-(9Z-octadecenoyl)-sn-glycerol = 9-(9Z-octadecenoyloxy)-octadecanoate + 2-(9Z-octadecenoyl)-glycerol. The enzyme catalyses 1-hexadecanoyl-2,3-di-(9Z)-octadecenoyl-sn-glycerol + 9-hydroxy-octadecanoate = 1-hexadecanoyl-3-(9Z)-octadecenoyl-sn-glycerol + 9-(9Z-octadecenoyloxy)-octadecanoate. It functions in the pathway glycerolipid metabolism; triacylglycerol degradation. Functionally, catalyzes the initial step in triglyceride hydrolysis in adipocyte and non-adipocyte lipid droplets. Exhibits a strong preference for the hydrolysis of long-chain fatty acid esters at the sn-2 position of the glycerol backbone and acts coordinately with LIPE/HLS and DGAT2 within the lipolytic cascade. Also possesses acylglycerol transacylase and phospholipase A2 activities. Transfers fatty acid from triglyceride to retinol, hydrolyzes retinylesters, and generates 1,3-diacylglycerol from triglycerides. Regulates adiposome size and may be involved in the degradation of adiposomes. Catalyzes the formation of an ester bond between hydroxy fatty acids and fatty acids derived from triglycerides or diglycerides to generate fatty acid esters of hydroxy fatty acids (FAHFAs) in adipocytes. Acts antagonistically with LDAH in regulation of cellular lipid stores. Inhibits LDAH-stimulated lipid droplet fusion. May play an important role in energy homeostasis. May play a role in the response of the organism to starvation, enhancing hydrolysis of triglycerides and providing free fatty acids to other tissues to be oxidized in situations of energy depletion. This is Patatin-like phospholipase domain-containing protein 2 from Rattus norvegicus (Rat).